The primary structure comprises 190 residues: Major sperm protein 32 (190 aa).

Residues 72 to 189 (MIQTQPGTKI…RRKNLPIEYN (118 aa)) form the MSP domain.

As to expression, sperm.

It localises to the cell projection. It is found in the pseudopodium. Its subcellular location is the cytoplasm. The protein localises to the cytoskeleton. Central component in molecular interactions underlying sperm crawling. Forms an extensive filament system that extends from sperm villipoda, along the leading edge of the pseudopod. The protein is Major sperm protein 32 (msp-32) of Caenorhabditis elegans.